A 156-amino-acid chain; its full sequence is 3-hydroxyacyl-[acyl-carrier-protein] dehydratase FabZ (156 aa).

The active site involves histidine 57.

Belongs to the thioester dehydratase family. FabZ subfamily.

The protein localises to the cytoplasm. It catalyses the reaction a (3R)-hydroxyacyl-[ACP] = a (2E)-enoyl-[ACP] + H2O. Functionally, involved in unsaturated fatty acids biosynthesis. Catalyzes the dehydration of short chain beta-hydroxyacyl-ACPs and long chain saturated and unsaturated beta-hydroxyacyl-ACPs. This Anaeromyxobacter dehalogenans (strain 2CP-C) protein is 3-hydroxyacyl-[acyl-carrier-protein] dehydratase FabZ.